The primary structure comprises 384 residues: Spermidine/putrescine import ATP-binding protein PotA (384 aa).

The ABC transporter domain occupies 6–238 (ITFNNVSKTF…PINHFVANFI (233 aa)). 40 to 47 (GASGSGKS) provides a ligand contact to ATP.

This sequence belongs to the ABC transporter superfamily. Spermidine/putrescine importer (TC 3.A.1.11.1) family. The complex is composed of two ATP-binding proteins (PotA), two transmembrane proteins (PotB and PotC) and a solute-binding protein (PotD).

Its subcellular location is the cell membrane. The catalysed reaction is ATP + H2O + polyamine-[polyamine-binding protein]Side 1 = ADP + phosphate + polyamineSide 2 + [polyamine-binding protein]Side 1.. In terms of biological role, part of the ABC transporter complex PotABCD involved in spermidine/putrescine import. Responsible for energy coupling to the transport system. This chain is Spermidine/putrescine import ATP-binding protein PotA, found in Streptococcus pyogenes serotype M28 (strain MGAS6180).